A 643-amino-acid polypeptide reads, in one-letter code: SURP and G-patch domain-containing protein 1 (643 aa).

Disordered stretches follow at residues 48-69 (ARME…HPGE) and 97-119 (KAQT…SSLK). Threonine 128 carries the phosphothreonine modification. The SURP motif 1 repeat unit spans residues 187–229 (VIEKLARFVAEGGPELEKVAMEDYKDNPAFTFLHDKNSREFLY). Residue serine 252 is modified to Phosphoserine. Residues 262–305 (LAEKLARFIADGGPEVETIALQNNRENQAFSFLYDPNSQGYRYY) form an SURP motif 2 repeat. Disordered stretches follow at residues 316 to 335 (KAGS…LRRK) and 360 to 393 (AVNP…DKVE). Serine 322 is subject to Phosphoserine. The short motif at 378–384 (KRKRKSR) is the Nuclear localization signal element. A phosphoserine mark is found at serine 407, serine 409, serine 412, and serine 483. Positions 560–607 (VENIGYQMLMKMGWKEGEGLGTEGQGIKNPVNKGATTIDGAGFGIDRP) constitute a G-patch domain.

In terms of assembly, component of the spliceosome.

It is found in the nucleus. Functionally, plays a role in pre-mRNA splicing. The polypeptide is SURP and G-patch domain-containing protein 1 (Sugp1) (Mus musculus (Mouse)).